The chain runs to 167 residues: Small ribosomal subunit protein uS5 (167 aa).

Positions 12–75 constitute an S5 DRBM domain; that stretch reads LEERVVTINR…EDAKKNMVFV (64 aa).

It belongs to the universal ribosomal protein uS5 family. Part of the 30S ribosomal subunit. Contacts proteins S4 and S8.

With S4 and S12 plays an important role in translational accuracy. Its function is as follows. Located at the back of the 30S subunit body where it stabilizes the conformation of the head with respect to the body. In Listeria innocua serovar 6a (strain ATCC BAA-680 / CLIP 11262), this protein is Small ribosomal subunit protein uS5.